Reading from the N-terminus, the 401-residue chain is Mu-type opioid receptor (401 aa).

At 1 to 69 (MDSSAVPANA…CPPTGSPSMI (69 aa)) the chain is on the extracellular side. N-linked (GlcNAc...) asparagine glycans are attached at residues Asn9, Asn12, Asn34, Asn41, and Asn49. The helical transmembrane segment at 70 to 94 (TAITIMALYSIVCVVGLFGNFLVMY) threads the bilayer. The Cytoplasmic segment spans residues 95-107 (VIVRYTKMKTATN). The chain crosses the membrane as a helical span at residues 108-132 (IYIFNLALADALATSTLPFQSVNYL). Residues 133–143 (MGTWPFGTILC) lie on the Extracellular side of the membrane. A disulfide bridge links Cys143 with Cys220. The helical transmembrane segment at 144 to 166 (KIVISIDYYNMFTSIFTLCTMSV) threads the bilayer. Residues 167–186 (DRYIAVCHPVKALDFRTPRN) are Cytoplasmic-facing. Phosphotyrosine is present on Tyr169. Residues 187–208 (AKIINVCNWILSSAIGLPVMFM) traverse the membrane as a helical segment. Topologically, residues 209 to 231 (ATTKYRHGSIDCTLTFSHPTWYW) are extracellular. Residues 232–256 (ENLLKICVFIFAFIMPVLIITVCYG) traverse the membrane as a helical segment. Residues 257–280 (LMILRLKSVRMLSGSKEKDRNLRR) are Cytoplasmic-facing. Residues 281–307 (ITRMVLVVVAVFIVCWTPIHIYVIIKA) traverse the membrane as a helical segment. Topologically, residues 308-315 (LVTIPETT) are extracellular. The chain crosses the membrane as a helical span at residues 316 to 339 (FQTVSWHFCIALGYTNSCLNPVLY). The NPxxY; plays a role in stabilizing the activated conformation of the receptor signature appears at 335–339 (NPVLY). Over 340 to 401 (AFLDENFKRC…NLEAETAPLP (62 aa)) the chain is Cytoplasmic. Cys354 is lipidated: S-palmitoyl cysteine. The interval 365–388 (NSTRIRQNTRDHPSTANTVDRTNH) is disordered. The residue at position 366 (Ser366) is a Phosphoserine. Thr373 is modified (phosphothreonine). Ser378 carries the post-translational modification Phosphoserine. At Thr397 the chain carries Phosphothreonine.

Belongs to the G-protein coupled receptor 1 family. In terms of assembly, forms homooligomers and heterooligomers with other GPCRs, such as OPRD1, OPRK1, OPRL1, NPFFR2, ADRA2A, SSTR2, CNR1 and CCR5 (probably in dimeric forms). Interacts with heterotrimeric G proteins; interaction with a heterotrimeric complex containing GNAI1, GNB1 and GNG2 stabilizes the active conformation of the receptor and increases its affinity for endomorphin-2, the synthetic opioid peptide DAMGO and for morphinan agonists. Interacts with PPL; the interaction disrupts agonist-mediated G-protein activation. Interacts (via C-terminus) with DNAJB4 (via C-terminus). Interacts with calmodulin; the interaction inhibits the constitutive activity of OPRM1; it abolishes basal and attenuates agonist-stimulated G-protein coupling. Interacts with FLNA, PLD2, RANBP9 and WLS and GPM6A. Interacts with RTP4. Interacts with SYP and GNAS. Interacts with RGS9, RGS17, RGS20, RGS4, PPP1R9B and HINT1. Phosphorylated. Differentially phosphorylated in basal and agonist-induced conditions. Agonist-mediated phosphorylation modulates receptor internalization. Phosphorylated by GRK2 in a agonist-dependent manner. Phosphorylation at Tyr-169 requires receptor activation, is dependent on non-receptor protein tyrosine kinase Src and results in a decrease in agonist efficacy by reducing G-protein coupling efficiency. Phosphorylated on tyrosine residues; the phosphorylation is involved in agonist-induced G-protein-independent receptor down-regulation. Phosphorylation at Ser-378 is involved in G-protein-dependent but not beta-arrestin-dependent activation of the ERK pathway. Post-translationally, ubiquitinated. A basal ubiquitination seems not to be related to degradation. Ubiquitination is increased upon formation of OPRM1:OPRD1 oligomers leading to proteasomal degradation; the ubiquitination is diminished by RTP4.

The protein resides in the cell membrane. The protein localises to the cell projection. It is found in the axon. It localises to the perikaryon. Its subcellular location is the dendrite. The protein resides in the endosome. Receptor for endogenous opioids such as beta-endorphin and endomorphin. Receptor for natural and synthetic opioids including morphine, heroin, DAMGO, fentanyl, etorphine, buprenorphin and methadone. Also activated by enkephalin peptides, such as Met-enkephalin or Met-enkephalin-Arg-Phe, with higher affinity for Met-enkephalin-Arg-Phe. Agonist binding to the receptor induces coupling to an inactive GDP-bound heterotrimeric G-protein complex and subsequent exchange of GDP for GTP in the G-protein alpha subunit leading to dissociation of the G-protein complex with the free GTP-bound G-protein alpha and the G-protein beta-gamma dimer activating downstream cellular effectors. The agonist- and cell type-specific activity is predominantly coupled to pertussis toxin-sensitive G(i) and G(o) G alpha proteins, GNAI1, GNAI2, GNAI3 and GNAO1, and to a lesser extent to pertussis toxin-insensitive G alpha proteins GNAZ and GNA15. They mediate an array of downstream cellular responses, including inhibition of adenylate cyclase activity and both N-type and L-type calcium channels, activation of inward rectifying potassium channels, mitogen-activated protein kinase (MAPK), phospholipase C (PLC), phosphoinositide/protein kinase (PKC), phosphoinositide 3-kinase (PI3K) and regulation of NF-kappa-B. Also couples to adenylate cyclase stimulatory G alpha proteins. The selective temporal coupling to G-proteins and subsequent signaling can be regulated by RGSZ proteins, such as RGS9, RGS17 and RGS4. Phosphorylation by members of the GPRK subfamily of Ser/Thr protein kinases and association with beta-arrestins is involved in short-term receptor desensitization. Beta-arrestins associate with the GPRK-phosphorylated receptor and uncouple it from the G-protein thus terminating signal transduction. The phosphorylated receptor is internalized through endocytosis via clathrin-coated pits which involves beta-arrestins. The activation of the ERK pathway occurs either in a G-protein-dependent or a beta-arrestin-dependent manner and is regulated by agonist-specific receptor phosphorylation. Acts as a class A G-protein coupled receptor (GPCR) which dissociates from beta-arrestin at or near the plasma membrane and undergoes rapid recycling. Receptor down-regulation pathways are varying with the agonist and occur dependent or independent of G-protein coupling. Endogenous ligands induce rapid desensitization, endocytosis and recycling. Heterooligomerization with other GPCRs can modulate agonist binding, signaling and trafficking properties. Involved in neurogenesis. The chain is Mu-type opioid receptor (OPRM1) from Pan troglodytes (Chimpanzee).